A 432-amino-acid chain; its full sequence is 3-phosphoshikimate 1-carboxyvinyltransferase (432 aa).

3-phosphoshikimate contacts are provided by lysine 25, serine 26, and arginine 30. Lysine 25 is a binding site for phosphoenolpyruvate. Residues glycine 97 and arginine 125 each contribute to the phosphoenolpyruvate site. Serine 170, glutamine 172, aspartate 318, and lysine 345 together coordinate 3-phosphoshikimate. Glutamine 172 contributes to the phosphoenolpyruvate binding site. The active-site Proton acceptor is aspartate 318. Residues arginine 349 and arginine 393 each coordinate phosphoenolpyruvate.

Belongs to the EPSP synthase family. In terms of assembly, monomer.

The protein localises to the cytoplasm. The enzyme catalyses 3-phosphoshikimate + phosphoenolpyruvate = 5-O-(1-carboxyvinyl)-3-phosphoshikimate + phosphate. Its pathway is metabolic intermediate biosynthesis; chorismate biosynthesis; chorismate from D-erythrose 4-phosphate and phosphoenolpyruvate: step 6/7. Catalyzes the transfer of the enolpyruvyl moiety of phosphoenolpyruvate (PEP) to the 5-hydroxyl of shikimate-3-phosphate (S3P) to produce enolpyruvyl shikimate-3-phosphate and inorganic phosphate. In Geobacillus thermodenitrificans (strain NG80-2), this protein is 3-phosphoshikimate 1-carboxyvinyltransferase.